Consider the following 259-residue polypeptide: DNA utilization protein HofM (259 aa).

In terms of biological role, required for the use of extracellular DNA as a nutrient. This chain is DNA utilization protein HofM (hofM), found in Escherichia coli (strain K12).